The primary structure comprises 85 residues: Cell division topological specificity factor (85 aa).

The protein belongs to the MinE family.

Its function is as follows. Prevents the cell division inhibition by proteins MinC and MinD at internal division sites while permitting inhibition at polar sites. This ensures cell division at the proper site by restricting the formation of a division septum at the midpoint of the long axis of the cell. The chain is Cell division topological specificity factor from Chromobacterium violaceum (strain ATCC 12472 / DSM 30191 / JCM 1249 / CCUG 213 / NBRC 12614 / NCIMB 9131 / NCTC 9757 / MK).